The primary structure comprises 88 residues: Small ribosomal subunit protein bS20 (88 aa).

A disordered region spans residues 1–25; it reads MANTPSAKKAARKIERRTAVNRARR.

The protein belongs to the bacterial ribosomal protein bS20 family.

Functionally, binds directly to 16S ribosomal RNA. In Azorhizobium caulinodans (strain ATCC 43989 / DSM 5975 / JCM 20966 / LMG 6465 / NBRC 14845 / NCIMB 13405 / ORS 571), this protein is Small ribosomal subunit protein bS20.